We begin with the raw amino-acid sequence, 324 residues long: Probable 6-phosphogluconolactonase 4, chloroplastic (324 aa).

The transit peptide at 1 to 63 (MSVSAAVAAA…PAMATDGAAA (63 aa)) directs the protein to the chloroplast. Residues 19-43 (ARHRSPPASRVAATSRGRPFSSGPH) are disordered.

The protein belongs to the glucosamine/galactosamine-6-phosphate isomerase family. 6-phosphogluconolactonase subfamily.

It localises to the plastid. It is found in the chloroplast. The catalysed reaction is 6-phospho-D-glucono-1,5-lactone + H2O = 6-phospho-D-gluconate + H(+). Its pathway is carbohydrate degradation; pentose phosphate pathway; D-ribulose 5-phosphate from D-glucose 6-phosphate (oxidative stage): step 2/3. Hydrolysis of 6-phosphogluconolactone to 6-phosphogluconate. In Oryza sativa subsp. japonica (Rice), this protein is Probable 6-phosphogluconolactonase 4, chloroplastic.